A 422-amino-acid chain; its full sequence is Serine--tRNA ligase (422 aa).

L-serine is bound at residue 231 to 233 (TSE). 262–264 (RQE) lines the ATP pocket. Residue glutamate 285 coordinates L-serine. 349-352 (EISS) serves as a coordination point for ATP. An L-serine-binding site is contributed by serine 384.

The protein belongs to the class-II aminoacyl-tRNA synthetase family. Type-1 seryl-tRNA synthetase subfamily. As to quaternary structure, homodimer. The tRNA molecule binds across the dimer.

The protein localises to the cytoplasm. It carries out the reaction tRNA(Ser) + L-serine + ATP = L-seryl-tRNA(Ser) + AMP + diphosphate + H(+). It catalyses the reaction tRNA(Sec) + L-serine + ATP = L-seryl-tRNA(Sec) + AMP + diphosphate + H(+). It participates in aminoacyl-tRNA biosynthesis; selenocysteinyl-tRNA(Sec) biosynthesis; L-seryl-tRNA(Sec) from L-serine and tRNA(Sec): step 1/1. In terms of biological role, catalyzes the attachment of serine to tRNA(Ser). Is also able to aminoacylate tRNA(Sec) with serine, to form the misacylated tRNA L-seryl-tRNA(Sec), which will be further converted into selenocysteinyl-tRNA(Sec). The protein is Serine--tRNA ligase of Mycoplasma mycoides subsp. mycoides SC (strain CCUG 32753 / NCTC 10114 / PG1).